The primary structure comprises 795 residues: MMPLKKRQRQTLVCSNCKRRKSRCDRGKPACGNCIRLGNRETCHYFISPSEKGGDGGDSPGESAGSNGALERWQFVRAHSCGRVDLTAGRTVVFGKRSAVYVAGVLSTDAVRYRDLYLELLSVFSHAAIKKTVSQLHAQAQVGAQEASLPNSVKRVIRMEDEGMLQESSPYILAKHKKVHQSLVDGFAQSRYEGRQQFADVEEAAKQHLVERYIFLQKVLPAFKKHVLPLIPIYDERMLCVTVEQLYDDYQKRGKFSAKNGDLITVATILLITRLVYLAIRFDKCSVVNVKYNRILELDTEPYAALAYELLPRDKLLRKVTLPQLQCLILLRFHNWCSPMDGDGESLQYSNVLMGTIYACCKEIGASWLSFKEPDKYDFAKARGSNSRFTMAFAEMEPGEVDSANESVVKLYQQIWAVVLHWDRNVSMLTGLEPIIGTSMKPAAMSSYNNWYADMISLDYLKWQLLTRINEDPSEVNLEEVKPIISEIRQRLGQFTSESELAFEQELILQLVELSILHAAFIGPTSNVSAAEHRKNYQELLERIIHLSGIFITYFHDPPTTNHQYGRFYTNKIVEVAMYRVYQILTGLILRISSACQDQSLKPTLMKFYKNLCSLYFNELGYDYYQVFKRLFEAKVKYKILEQTANPVFIMLRYLFAEIQSGNMESMKSQELIGLIYGEYKKMGGELNLDMMDLWNHIVPTQCDHNIGLNSLFTTEIFPTDQYSDYNLFVSFYDYASNKLTEDTNQAAEKSIAHNPSTSIHDLCKGGASPHFDLLEGILDPLDFMTYLDSIPGET.

Residues 14 to 43 constitute a DNA-binding region (zn(2)-C6 fungal-type); sequence CSNCKRRKSRCDRGKPACGNCIRLGNRETC.

Belongs to the OAF3 family.

It localises to the cytoplasm. It is found in the nucleus. The protein localises to the mitochondrion. Transcriptional inhibitor with a significantly increased number of target genes in response to oleate. This is Oleate activated transcription factor 3 (OAF3) from Eremothecium gossypii (strain ATCC 10895 / CBS 109.51 / FGSC 9923 / NRRL Y-1056) (Yeast).